Consider the following 815-residue polypeptide: Probable oligoxyloglucan-reducing end-specific xyloglucanase (815 aa).

The N-terminal stretch at 1–19 (MKFWLQQLGLAVLCASSAA) is a signal peptide. Asp-58 acts as the Nucleophile in catalysis. The N-linked (GlcNAc...) asparagine glycan is linked to Asn-113. One copy of the BNR 1 repeat lies at 118 to 128 (FVSNDRGATFT). Asn-180 carries an N-linked (GlcNAc...) asparagine glycan. Residues 218-228 (YYTTDGGKNWE) form a BNR 2 repeat. Residues Asn-246, Asn-290, and Asn-304 are each glycosylated (N-linked (GlcNAc...) asparagine). One copy of the BNR 3 repeat lies at 351-361 (YLSRDGGKTWK). A glycan (N-linked (GlcNAc...) asparagine) is linked at Asn-387. Asp-489 functions as the Proton donor in the catalytic mechanism. One copy of the BNR 4 repeat lies at 545-555 (YSTDGGSEWTK). 2 N-linked (GlcNAc...) asparagine glycosylation sites follow: Asn-564 and Asn-603. Residues 649–658 (YVSTDGGLSY) form a BNR 5 repeat. N-linked (GlcNAc...) asparagine glycosylation occurs at Asn-662. BNR repeat units lie at residues 696–706 (YHTTDFGKRWK) and 749–759 (YRSDDNGSTWD). The N-linked (GlcNAc...) asparagine glycan is linked to Asn-754.

The protein belongs to the glycosyl hydrolase 74 family.

It localises to the secreted. It catalyses the reaction Hydrolysis of cellobiose from the reducing end of xyloglucans consisting of a beta-(1-&gt;4)-linked glucan carrying alpha-D-xylosyl groups on O-6 of the glucose residues. To be a substrate, the first residue must be unsubstituted, the second residue may bear a xylosyl group, whether further glycosylated or not, and the third residue, which becomes the new terminus by the action of the enzyme, is preferably xylosylated, but this xylose residue must not be further substituted.. Functionally, oligoxyloglucan-reducing end-specific xyloglucanase involved in degradation of xyloglucans. Releases the first two glycosyl segments from oligoxyloglucans. Active against cotton xyloglucan, tamarind xyloglucan and tamarind xyloglucan oligomers. This chain is Probable oligoxyloglucan-reducing end-specific xyloglucanase (xgcA), found in Neosartorya fischeri (strain ATCC 1020 / DSM 3700 / CBS 544.65 / FGSC A1164 / JCM 1740 / NRRL 181 / WB 181) (Aspergillus fischerianus).